Consider the following 196-residue polypeptide: UMP-CMP kinase (196 aa).

An ATP-binding site is contributed by 13 to 18 (GAGKGT). The segment at 33–63 (SAGDLLRDERKRPGSQYGELIENYIKEGEIV) is NMP. A ribonucleoside 5'-phosphate-binding positions include Arg-39, 61 to 63 (EIV), and 93 to 96 (GFPR). Residue Asn-100 participates in CMP binding. The LID stretch occupies residues 133-143 (ERGKSSGRSDD). Residue Arg-134 coordinates ATP. Positions 140 and 151 each coordinate a ribonucleoside 5'-phosphate. Lys-179 is an ATP binding site.

It belongs to the adenylate kinase family. UMP-CMP kinase subfamily. As to quaternary structure, monomer. The cofactor is Mg(2+).

The protein resides in the nucleus. The protein localises to the cytoplasm. It carries out the reaction CMP + ATP = CDP + ADP. The catalysed reaction is dCMP + ATP = dCDP + ADP. It catalyses the reaction UMP + ATP = UDP + ADP. The enzyme catalyses a 2'-deoxyribonucleoside 5'-diphosphate + ATP = a 2'-deoxyribonucleoside 5'-triphosphate + ADP. It carries out the reaction a ribonucleoside 5'-diphosphate + ATP = a ribonucleoside 5'-triphosphate + ADP. Catalyzes the phosphorylation of pyrimidine nucleoside monophosphates at the expense of ATP. Plays an important role in de novo pyrimidine nucleotide biosynthesis. Has preference for UMP and CMP as phosphate acceptors. Also displays broad nucleoside diphosphate kinase activity. The chain is UMP-CMP kinase (CMPK) from Gallus gallus (Chicken).